The following is a 935-amino-acid chain: Progesterone receptor (935 aa).

The AF3; mediates transcriptional activation stretch occupies residues 1–164; sequence MTELKAKGPR…PATQRVLSPL (164 aa). A disordered region spans residues 1–256; it reads MTELKAKGPR…AAAGGGAAAV (256 aa). A modulating, Pro-Rich region spans residues 1 to 568; it reads MTELKAKGPR…YSFESLPQKI (568 aa). Ser20 bears the Phosphoserine mark. An LXXL motif 1 motif is present at residues 55 to 59; the sequence is LDGLL. Ser81 bears the Phosphoserine mark. Positions 115-119 match the LXXL motif 2 motif; sequence LDTLL. Ser130 and Ser162 each carry phosphoserine. A mediates transcriptional transrepression region spans residues 165–305; sequence MSRSGGKAGD…LATTTMDFTH (141 aa). A Nuclear localization signal motif is present at residues 183–187; sequence KVLPR. A phosphoserine mark is found at Ser190 and Ser213. The span at 220–231 shows a compositional bias: acidic residues; sequence EVEEEDGSESED. The segment covering 232–246 has biased composition (low complexity); sequence SAGPLLKGKPRALGG. Position 294 is a phosphoserine; by MAPK1 (Ser294). A disordered region spans residues 328-353; sequence SYDGGAGAASAFAPPRSSPSASSTPV. The segment covering 335-350 has biased composition (low complexity); sequence AASAFAPPRSSPSASS. Ser345 is subject to Phosphoserine; by MAPK. A Glycyl lysine isopeptide (Lys-Gly) (interchain with G-Cter in SUMO); alternate cross-link involves residue Lys388. Residue Lys388 forms a Glycyl lysine isopeptide (Lys-Gly) (interchain with G-Cter in ubiquitin); alternate linkage. Ser400 is modified (phosphoserine; by CDK2). The tract at residues 415–452 is disordered; sequence PDFPLGPPPPLPPRAPPSRPGEAAVTAAPAGASVSSAS. Pro residues predominate over residues 418–433; the sequence is PLGPPPPLPPRAPPSR. The segment covering 434 to 452 has biased composition (low complexity); sequence PGEAAVTAAPAGASVSSAS. An AF1; mediates transcriptional activation region spans residues 456–548; it reads STLECILYKA…VYPPYLNYLR (93 aa). Lys533 participates in a covalent cross-link: Glycyl lysine isopeptide (Lys-Gly) (interchain with G-Cter in SUMO). 2 consecutive NR C4-type zinc fingers follow at residues 569–589 and 605–629; these read CLIC…CGSC and CAGR…LRKC. The nuclear receptor DNA-binding region spans 569–641; that stretch reads CLICGDEASG…AGMVLGGRKF (73 aa). Ser678 carries the post-translational modification Phosphoserine. The region spanning 681-915 is the NR LBD domain; it reads QDIQLIPPLI…EFPEMMSEVI (235 aa). An AF2; mediates transcriptional activation region spans residues 689-935; that stretch reads LINLLVSIEP…MVKPLLFHKK (247 aa). Arg768 is a progesterone binding site.

This sequence belongs to the nuclear hormone receptor family. As to quaternary structure, interacts with SMARD1 and UNC45A. Interacts with CUEDC2; the interaction promotes ubiquitination, decreases sumoylation, and represses transcriptional activity. Interacts with PIAS3; the interaction promotes sumoylation of PR in a hormone-dependent manner, inhibits DNA-binding, and alters nuclear export. Interacts with SP1; the interaction requires ligand-induced phosphorylation on Ser-345 by ERK1/2-MAPK. Interacts with PRMT2. Interacts with NCOA2 and NCOA1. Interacts with KLF9. Interacts with GTF2B. Post-translationally, phosphorylated on multiple serine sites. Several of these sites are hormone-dependent. Phosphorylation on Ser-294 is highly hormone-dependent and modulates ubiquitination and sumoylation on Lys-388. Phosphorylation on Ser-345 also requires induction by hormone. Basal phosphorylation on Ser-81, Ser-162, Ser-190 and Ser-400 is increased in response to progesterone and can be phosphorylated in vitro by the CDK2-A1 complex. Increased levels of phosphorylation on Ser-400 also in the presence of EGF, heregulin, IGF, PMA and FBS. Phosphorylation at this site by CDK2 is ligand-independent, and increases nuclear translocation and transcriptional activity. Phosphorylation at Ser-162 and Ser-294, but not at Ser-190, is impaired during the G(2)/M phase of the cell cycle. Phosphorylation on Ser-345 by ERK1/2 MAPK is required for interaction with SP1. Sumoylation is hormone-dependent and represses transcriptional activity. Sumoylation on all three sites is enhanced by PIAS3. Desumoylated by SENP1. Sumoylation on Lys-388, the main site of sumoylation, is repressed by ubiquitination on the same site, and modulated by phosphorylation at Ser-294. In terms of processing, ubiquitination is hormone-dependent and represses sumoylation on the same site. Promoted by MAPK-mediated phosphorylation on Ser-294. Ubiquitinated by UBR5, leading to its degradation: UBR5 specifically recognizes and binds ligand-bound PGR when it is not associated with coactivators (NCOAs). In presence of NCOAs, the UBR5-degron is not accessible, preventing its ubiquitination and degradation. Post-translationally, palmitoylated by ZDHHC7 and ZDHHC21. Palmitoylation is required for plasma membrane targeting and for rapid intracellular signaling via ERK and AKT kinases and cAMP generation.

It is found in the nucleus. Its subcellular location is the cytoplasm. Functionally, the steroid hormones and their receptors are involved in the regulation of eukaryotic gene expression and affect cellular proliferation and differentiation in target tissues. Transcriptional activator of several progesteron-dependent promoters in a variety of cell types. Involved in activation of SRC-dependent MAPK signaling on hormone stimulation. The sequence is that of Progesterone receptor (PGR) from Macaca sylvanus (Barbary macaque).